Here is a 575-residue protein sequence, read N- to C-terminus: Alpha-(1,6)-fucosyltransferase (575 aa).

Residues 1-9 (MRPWTGSWR) lie on the Cytoplasmic side of the membrane. The helical; Signal-anchor for type II membrane protein transmembrane segment at 10-30 (WIMLILFAWGTLLFYIGGHLV) threads the bilayer. Residues 31-575 (RDNDHPDHSS…KVPHVPEAEK (545 aa)) are Lumenal-facing. 3 disulfides stabilise this stretch: cysteine 204-cysteine 266, cysteine 212-cysteine 230, and cysteine 218-cysteine 222. The 288-residue stretch at 206–493 (KAKKLVCNIN…PDASANFHSL (288 aa)) folds into the GT23 domain. Serine 278 carries the post-translational modification Phosphoserine. Residues 299-305 (PRPPYLP) carry the SH3-binding motif. Residues 365–366 (RR) are important for donor substrate binding. An intrachain disulfide couples cysteine 465 to cysteine 472. One can recognise an SH3 domain in the interval 502–563 (QNAHNQIAIY…PSYKVREKIE (62 aa)).

This sequence belongs to the glycosyltransferase 23 family. Post-translationally, tyrosine phosphorylated by PKDCC/VLK. In terms of tissue distribution, highest expression found in brain. Also found in heart, lung, spleen and kidney.

Its subcellular location is the golgi apparatus. It is found in the golgi stack membrane. It carries out the reaction N(4)-{beta-D-GlcNAc-(1-&gt;2)-alpha-D-Man-(1-&gt;3)-[beta-D-GlcNAc-(1-&gt;2)-alpha-D-Man-(1-&gt;6)]-beta-D-Man-(1-&gt;4)-beta-D-GlcNAc-(1-&gt;4)-beta-D-GlcNAc}-L-asparaginyl-[protein] + GDP-beta-L-fucose = an N(4)-{beta-D-GlcNAc-(1-&gt;2)-alpha-D-Man-(1-&gt;3)-[beta-D-GlcNAc-(1-&gt;2)-alpha-D-Man-(1-&gt;6)]-beta-D-Man-(1-&gt;4)-beta-D-GlcNAc-(1-&gt;4)-[alpha-L-Fuc-(1-&gt;6)]-beta-D-GlcNAc}-L-asparaginyl-[protein] + GDP + H(+). It functions in the pathway protein modification; protein glycosylation. Catalyzes the addition of fucose in alpha 1-6 linkage to the first GlcNAc residue, next to the peptide chains in N-glycans. The protein is Alpha-(1,6)-fucosyltransferase (FUT8) of Bos taurus (Bovine).